A 293-amino-acid polypeptide reads, in one-letter code: Aspartate carbamoyltransferase catalytic subunit (293 aa).

Arg50 and Thr51 together coordinate carbamoyl phosphate. Lys78 is a binding site for L-aspartate. Carbamoyl phosphate is bound by residues Arg100, His127, and Gln130. Arg160 and Arg210 together coordinate L-aspartate. Ala253 and Pro254 together coordinate carbamoyl phosphate.

It belongs to the aspartate/ornithine carbamoyltransferase superfamily. ATCase family. Heterododecamer (2C3:3R2) of six catalytic PyrB chains organized as two trimers (C3), and six regulatory PyrI chains organized as three dimers (R2).

The enzyme catalyses carbamoyl phosphate + L-aspartate = N-carbamoyl-L-aspartate + phosphate + H(+). It participates in pyrimidine metabolism; UMP biosynthesis via de novo pathway; (S)-dihydroorotate from bicarbonate: step 2/3. Catalyzes the condensation of carbamoyl phosphate and aspartate to form carbamoyl aspartate and inorganic phosphate, the committed step in the de novo pyrimidine nucleotide biosynthesis pathway. This chain is Aspartate carbamoyltransferase catalytic subunit, found in Staphylococcus epidermidis (strain ATCC 35984 / DSM 28319 / BCRC 17069 / CCUG 31568 / BM 3577 / RP62A).